A 421-amino-acid polypeptide reads, in one-letter code: Cytochrome c biogenesis protein Ccs1 (421 aa).

Helical transmembrane passes span 12–32 (LRFA…GTVI), 71–91 (TWWF…CTIL), and 157–177 (IAPI…IFGA).

The protein belongs to the Ccs1/CcsB family. As to quaternary structure, may interact with CcsA.

It is found in the plastid. The protein resides in the chloroplast thylakoid membrane. Functionally, required during biogenesis of c-type cytochromes (cytochrome c6 and cytochrome f) at the step of heme attachment. This is Cytochrome c biogenesis protein Ccs1 from Trieres chinensis (Marine centric diatom).